A 1363-amino-acid polypeptide reads, in one-letter code: Tonsoku-like protein (1363 aa).

8 TPR repeats span residues 27-60 (AAYCHQLGELLASHGRFKDALEEHQQELHLLESV), 67-100 (AVAHRKIGERLAEMENYSAALKHQHLYLDLAGSL), 107-147 (QRAW…VDEK), 162-195 (TRLYLNLGLTCESLQQTALCNNYFKKSIFLAEQN), 202-235 (FRARYNLGAIHWRGGQHSQAMRCLEGARECARAM), 242-275 (SECCVLVSQVLQDLGDFLAAKRALKKAYRLGSQK), 311-344 (MAICEQLGDLFSKAGDFPKAAEAYQKQLHLAELL), and 352-385 (AVIHVSLATTLGDMKDHRKAVHHYEEELRLRKGN). A disordered region spans residues 460–511 (SMAKDTEEEEEEEEEEEEEASEAPETSELELSESEDDADGLSQQLEEDEELQ). The segment covering 465 to 510 (TEEEEEEEEEEEEEASEAPETSELELSESEDDADGLSQQLEEDEEL) has biased composition (acidic residues). 3 ANK repeats span residues 528–557 (MGETLLHRACIEGQLRRVQDLVKQGHPLNP), 561–590 (CGWTPLHEACNYGHLEIVRFLLDHGAAVDD), and 597–626 (DGITPLHDALNCGHFEVAELLIERGASVTL). The tract at residues 662 to 786 (ERLQMASSGQ…KSRETATSSA (125 aa)) is disordered. A compositionally biased stretch (polar residues) spans 666–684 (MASSGQASRSSPALQTIPS). Positions 692–713 (TSPPSSPCPEPSSYTPRPPEAS) are enriched in pro residues. Over residues 771–780 (KIPDPPKSRE) the composition is skewed to basic and acidic residues. Omega-N-methylarginine is present on R796. Disordered stretches follow at residues 841 to 866 (PLTRSGRPSTSVSDYERCPARPRTRV) and 883 to 909 (AGDGSLNAEPAENPSVPRTSGPNKENY). A compositionally biased stretch (polar residues) spans 842-853 (LTRSGRPSTSVS). 10 LRR repeats span residues 1060–1081 (ALRELRLAGNRLGDACATELLA), 1088–1108 (NLVLLDLSSNHLGQEGLRQLV), 1119–1140 (NLEELDLSMNPLGDGCGQALAS), 1147–1168 (MLSTLRLQACGFSSSFFLSHQA), 1179–1199 (HLKTLSLSYNLLGAPALARVL), 1206–1214 (TLKRLDLSS), 1238–1261 (ALAHLTLSANCLGDKAVRELSRCL), 1266–1287 (SLTSLDLSANPEVSCASLEELL), 1296–1317 (GLSFLGLSGCSIQGPLNSDLWD), and 1322–1343 (QLQELQLCTKDLSTKDRDSVCQ).

The protein belongs to the Tonsoku family. Component of the MMS22L-TONSL complex, a complex at least composed of MMS22L and TONSL/NFKBIL2. Interacts with the MCM complex, the FACT complex and the RPA complex. Interacts with MCM5; the interaction is direct. Binds histones, with a strong preference for histone H3.1 (histones H3.1 and H3-4/H3.1t). Interacts (via ANK repeats) with histone H4; specifically binds histone H4 lacking methylation at 'Lys-20' (H4K20me0). May interact with DNAJC9; the interaction seems to be histone-dependent.

It is found in the nucleus. It localises to the chromosome. The protein resides in the cytoplasm. Functionally, component of the MMS22L-TONSL complex, a complex that promotes homologous recombination-mediated repair of double-strand breaks (DSBs) at stalled or collapsed replication forks. The MMS22L-TONSL complex is required to maintain genome integrity during DNA replication. It mediates the assembly of RAD51 filaments on single-stranded DNA (ssDNA): the MMS22L-TONSL complex is recruited to DSBs following histone replacement by histone chaperones and eviction of the replication protein A complex (RPA/RP-A) from DSBs. Following recruitment to DSBs, the TONSL-MMS22L complex promotes recruitment of RAD51 filaments and subsequent homologous recombination. Within the complex, TONSL acts as a histone reader, which recognizes and binds newly synthesized histones following their replacement by histone chaperones. Specifically binds histone H4 lacking methylation at 'Lys-20' (H4K20me0) and histone H3.1. The protein is Tonsoku-like protein of Mus musculus (Mouse).